Here is a 1406-residue protein sequence, read N- to C-terminus: Enhancer of mRNA-decapping protein 4 (1406 aa).

Position 2 is an N-acetylalanine (Ala-2). Phosphoserine occurs at positions 3 and 6. Residue Lys-125 is modified to N6-acetyllysine. WD repeat units follow at residues 174–214 (GFTG…GKIQ), 230–277 (NHFR…SSHN), 295–334 (GHSTCLSEGALSPDGTVLATASHDGFVKFWQIYIEGQDEP), and 342–393 (PHDG…CLQT). A phosphoserine mark is found at Ser-560, Ser-565, Ser-583, and Ser-585. Disordered stretches follow at residues 604–631 (SLQQISASPSSSSSSSSSSSSSSSSSSS) and 667–686 (SLTLNSSSSSLQASPRSLLP). Low complexity predominate over residues 609 to 631 (SASPSSSSSSSSSSSSSSSSSSS). 4 positions are modified to phosphoserine: Ser-680, Ser-712, Ser-727, and Ser-729. Positions 719 to 744 (EPLGLPQASPSRTRSPDVISSASTAL) are disordered. Polar residues predominate over residues 726–744 (ASPSRTRSPDVISSASTAL). Phosphothreonine is present on Thr-731. A phosphoserine mark is found at Ser-733 and Ser-745. Disordered regions lie at residues 782-855 (HLLS…NGLQ) and 873-951 (QRDS…VAEP). Composition is skewed to polar residues over residues 823-832 (EVATPDSQVW) and 841-852 (ETCSTLTESPRN). Thr-826 carries the post-translational modification Phosphothreonine. Phosphoserine occurs at positions 849 and 876. Thr-879 bears the Phosphothreonine mark. Ser-880, Ser-884, Ser-892, Ser-895, and Ser-897 each carry phosphoserine. Thr-906 bears the Phosphothreonine mark. Residues 971–1030 (HNQEELLQRLCAQLEGLQSTVTDHVERALETRHEQEQRRLERALAEGQQRGGQLQEQLTQ) are a coiled coil. Ser-1385 carries the post-translational modification Phosphoserine.

Belongs to the WD repeat EDC4 family. In terms of assembly, part of a decapping complex consisting of DCP1A, DCP2, EDC3, EDC4 and probably DDX6. Part of a complex consisting of DCP1A, EDC3, EDC4 and DDX6. Part of a complex consisting of DCP1B, EDC3, EDC4 and DDX6. Interacts with DCP2. Interacts with RC3H1. Interacts with NBDY. Interacts with Tex19.1 and, probably, Tex19.2. Interacts with LSM14A. Interacts with DDX6.

It localises to the cytoplasm. The protein localises to the P-body. Its subcellular location is the nucleus. In the process of mRNA degradation, seems to play a role in mRNA decapping. Component of a complex containing DCP2 and DCP1A which functions in decapping of ARE-containing mRNAs. Promotes complex formation between DCP1A and DCP2. Enhances the catalytic activity of DCP2 (in vitro). This chain is Enhancer of mRNA-decapping protein 4, found in Mus musculus (Mouse).